The chain runs to 701 residues: 2-isopropylmalate synthase (701 aa).

The interval 1 to 40 (MTTSESPDAYTESFGAHTIVKPAGPPRVGQPSWNPQRASS) is disordered. The span at 31–40 (PSWNPQRASS) shows a compositional bias: polar residues. Residues 72–346 (PLWCAVDLRD…DPQIDFSNID (275 aa)) form the Pyruvate carboxyltransferase domain. Mg(2+) contacts are provided by D81, H285, H287, and N321. The regulatory domain stretch occupies residues 491 to 701 (PVRPLERIRQ…VVSAVNRAAR (211 aa)). A VNTR1 repeat occupies 575–593 (VTIASPAQPGEAGRHASDP). The interval 581–670 (AQPGEAGRHA…EAGRHASDPV (90 aa)) is disordered. The VNTR2 repeat unit spans residues 594–612 (VTIASPAQPGEAGRHASDP). Residues 613-631 (VTIASPAQPGEAGRHASDP) form a VNTR3 repeat. Residues 632 to 650 (VTIASPAQPGEAGRHASDP) form a VNTR4 repeat. A VNTR5 repeat occupies 651–669 (VTIASPAQPGEAGRHASDP).

It belongs to the alpha-IPM synthase/homocitrate synthase family. LeuA type 2 subfamily. Homodimer. Mg(2+) is required as a cofactor.

The protein resides in the cytoplasm. The enzyme catalyses 3-methyl-2-oxobutanoate + acetyl-CoA + H2O = (2S)-2-isopropylmalate + CoA + H(+). It functions in the pathway amino-acid biosynthesis; L-leucine biosynthesis; L-leucine from 3-methyl-2-oxobutanoate: step 1/4. Catalyzes the condensation of the acetyl group of acetyl-CoA with 3-methyl-2-oxobutanoate (2-ketoisovalerate) to form 3-carboxy-3-hydroxy-4-methylpentanoate (2-isopropylmalate). The sequence is that of 2-isopropylmalate synthase from Mycobacterium bovis (strain ATCC BAA-935 / AF2122/97).